The chain runs to 432 residues: Glutamate-1-semialdehyde 2,1-aminomutase (432 aa).

Position 265 is an N6-(pyridoxal phosphate)lysine (K265).

This sequence belongs to the class-III pyridoxal-phosphate-dependent aminotransferase family. HemL subfamily. In terms of assembly, homodimer. It depends on pyridoxal 5'-phosphate as a cofactor.

The protein localises to the cytoplasm. The catalysed reaction is (S)-4-amino-5-oxopentanoate = 5-aminolevulinate. It functions in the pathway porphyrin-containing compound metabolism; protoporphyrin-IX biosynthesis; 5-aminolevulinate from L-glutamyl-tRNA(Glu): step 2/2. The chain is Glutamate-1-semialdehyde 2,1-aminomutase from Histophilus somni (strain 2336) (Haemophilus somnus).